We begin with the raw amino-acid sequence, 894 residues long: MEPQVTLNVTFKNEIQSFLVSDPENTTWADIEAMVKVSFDLNTIQIKYLDEENEEVSINSQGEYEEALKMAVKQGNQLQMQVHEGHHVVDEAPPPVVGAKRLAARAGKKPLAHYSSLVRVLGSDMKTPEDSAVQSFPLATCDTDQPQDKPPDWFTSYLETFREQVVKETVEKLEQKLHEKLVLQNPSLGSCPSEVSMPTSEETLFLPENQFSWHIACNNCQRRIVGVRYQCSLCPSYNICEDCEAGPYGHDTNHVLLKLRRPVVGSSEPFCHSKYSTPRLPAALEQVRLPLQPCTPVMPTLSAAFVDENLPDGTHLQPGTKFIKHWRMKNTGNVKWSADTKLKFMWGNLTLASTEKKDVLVPCLKAGHVGVVSVEFIAPALEGTYTSHWRLSHKGQQFGPRVWCSIIVDPFPSEESPDNIEKGMISSSKTDDLTCQQEETFLLAKEERQLGEVTEQTEGTAACIPQKAKNVASERELYIPSVDLLTAQDLLSFELLDINIVQELERVPHNTPVDMTPCMSPLPHDSPLIEKPGLGQIQEENEGAGFKALPDSMVSVKRKAENIASVEEAEEDLSGTQFVCETVIRSLTLDAAPDHNPPCRQKSLQMKFALPEEGPLGNEREEIVHIAEEEAVMEEEEDEEEEDELKDEVQSQSSASSEDYIIILPECFDTSRPLGDSMYSSALSQPGLERGAEGEPGVEAGQEPAEAGERLPGGENQPQEHSISDIFTTSQTLETVPLIPEVVELPPPLPRSSPCVHHHGSPGVDLPVTIPEVSSVPDQIRGEPRGSSGLVNSRQKSYDHSRHHHGSSIAGGLVKGALSVAASAYKALFAGPPVTAQPIVSEDQTAALMAHLFEMGFCDRQLNLQLLKKHNYNILQVVTELLQLNNNDWYSQRY.

The region spanning 4–85 (QVTLNVTFKN…NQLQMQVHEG (82 aa)) is the PB1 domain. Serine 116 carries the phosphoserine modification. A ZZ-type zinc finger spans residues 212-264 (SWHIACNNCQRRIVGVRYQCSLCPSYNICEDCEAGPYGHDTNHVLLKLRRPVV). Zn(2+) is bound by residues cysteine 217, cysteine 220, cysteine 231, cysteine 234, cysteine 240, cysteine 243, histidine 250, and histidine 254. Residues 472 to 566 (ASERELYIPS…KRKAENIASV (95 aa)) form an ATG8 family proteins-binding region. A Phosphothreonine modification is found at threonine 516. Phosphoserine occurs at positions 520, 526, and 555. Positions 630 to 646 (EAVMEEEEDEEEEDELK) are enriched in acidic residues. Disordered regions lie at residues 630–656 (EAVM…SSAS), 678–721 (MYSS…PQEH), and 776–807 (VPDQ…HHGS). Positions 655 to 666 (ASSEDYIIILPE) are ATG8 family proteins-binding. Residues 841-885 (SEDQTAALMAHLFEMGFCDRQLNLQLLKKHNYNILQVVTELLQLN) form the UBA domain.

Homooligomer and heterooligomer. Interacts with SQSTM1, titin/TTN, TRIM55, RNF29, USP8, SQSTM1, MAP1LC3A, MAP1LC3B, MAP1LC3C, GABARAP, GABARAPL1 and GABARAPL2. Binds to ubiquitin and ubiquitinated proteins. Interacts with TAX1BP1. In terms of processing, phosphorylated by GSK3A; this phosphorylation inhibits NBR1 involvement in the formation of ubiquitinated protein aggregates.

The protein localises to the cytoplasm. Its subcellular location is the cytoplasmic vesicle. It is found in the autophagosome. The protein resides in the lysosome. It localises to the myofibril. The protein localises to the sarcomere. Its subcellular location is the m line. Acts probably as a receptor for selective autophagosomal degradation of ubiquitinated targets. This is Next to BRCA1 gene 1 protein (NBR1) from Pongo abelii (Sumatran orangutan).